The following is an 81-amino-acid chain: Photosystem I iron-sulfur center (81 aa).

4Fe-4S ferredoxin-type domains follow at residues 2-31 and 37-68; these read SHSVKIYDTCIGCTQCVRACPLDVLEMVPW and GQIASSPRTEDCVGCKRCETACPTDFLSIRVY. [4Fe-4S] cluster contacts are provided by Cys-11, Cys-14, Cys-17, Cys-21, Cys-48, Cys-51, Cys-54, and Cys-58.

The cyanobacterial PSI reaction center is composed of one copy each of PsaA,B,C,D,E,F,I,J,K,L,M and X, and forms trimeric complexes. [4Fe-4S] cluster is required as a cofactor.

It localises to the cellular thylakoid membrane. The enzyme catalyses reduced [plastocyanin] + hnu + oxidized [2Fe-2S]-[ferredoxin] = oxidized [plastocyanin] + reduced [2Fe-2S]-[ferredoxin]. Functionally, apoprotein for the two 4Fe-4S centers FA and FB of photosystem I (PSI); essential for photochemical activity. FB is the terminal electron acceptor of PSI, donating electrons to ferredoxin. The C-terminus interacts with PsaA/B/D and helps assemble the protein into the PSI complex. Required for binding of PsaD and PsaE to PSI. PSI is a plastocyanin/cytochrome c6-ferredoxin oxidoreductase, converting photonic excitation into a charge separation, which transfers an electron from the donor P700 chlorophyll pair to the spectroscopically characterized acceptors A0, A1, FX, FA and FB in turn. This chain is Photosystem I iron-sulfur center, found in Synechococcus sp. (strain RCC307).